A 103-amino-acid polypeptide reads, in one-letter code: N(4)-acetylcytidine amidohydrolase (103 aa).

An ASCH domain is found at 6-100; it reads ITFFQRFQDD…GESQFYVIEF (95 aa). Catalysis depends on lysine 21, which acts as the Proton acceptor. Threonine 24 (nucleophile) is an active-site residue. Glutamate 74 (proton donor) is an active-site residue.

Belongs to the N(4)-acetylcytidine amidohydrolase family.

The catalysed reaction is N(4)-acetylcytidine + H2O = cytidine + acetate + H(+). It catalyses the reaction N(4)-acetyl-2'-deoxycytidine + H2O = 2'-deoxycytidine + acetate + H(+). The enzyme catalyses N(4)-acetylcytosine + H2O = cytosine + acetate + H(+). Functionally, catalyzes the hydrolysis of N(4)-acetylcytidine (ac4C). The polypeptide is N(4)-acetylcytidine amidohydrolase (Klebsiella pneumoniae subsp. pneumoniae (strain ATCC 700721 / MGH 78578)).